Here is a 181-residue protein sequence, read N- to C-terminus: CASP-like protein 1F2 (181 aa).

The Cytoplasmic segment spans residues 1–18 (MADIETKSSQNQPLKTQN). A helical membrane pass occupies residues 19–39 (IFIGAQIFLRIVVIAASFAST). Residues 40-70 (WLMLTNKQTIDIGGFVLDANYSYSPEFKFLS) are Extracellular-facing. A glycan (N-linked (GlcNAc...) asparagine) is linked at asparagine 59. The chain crosses the membrane as a helical span at residues 71-91 (YANIVVGAFSFVSLLFLVLVG). Residues 92 to 100 (RRSSNPTYY) lie on the Cytoplasmic side of the membrane. Residues 101 to 121 (FILFLHDLALMSLVLGGCAAA) form a helical membrane-spanning segment. The Extracellular portion of the chain corresponds to 122 to 150 (TVIGSLGKYGNSHTGWMQICDHFGKFCKR). A helical membrane pass occupies residues 151–171 (ATTSVAFSYFSLVCLLILTIT). Topologically, residues 172–181 (SASKSRQIQV) are cytoplasmic.

Belongs to the Casparian strip membrane proteins (CASP) family. In terms of assembly, homodimer and heterodimers.

It is found in the cell membrane. This Populus trichocarpa (Western balsam poplar) protein is CASP-like protein 1F2.